A 124-amino-acid chain; its full sequence is Holo-[acyl-carrier-protein] synthase (124 aa).

The Mg(2+) site is built by Asp8 and Glu56.

The protein belongs to the P-Pant transferase superfamily. AcpS family. Mg(2+) is required as a cofactor.

The protein resides in the cytoplasm. It carries out the reaction apo-[ACP] + CoA = holo-[ACP] + adenosine 3',5'-bisphosphate + H(+). Functionally, transfers the 4'-phosphopantetheine moiety from coenzyme A to a Ser of acyl-carrier-protein. The polypeptide is Holo-[acyl-carrier-protein] synthase (Nitratidesulfovibrio vulgaris (strain ATCC 29579 / DSM 644 / CCUG 34227 / NCIMB 8303 / VKM B-1760 / Hildenborough) (Desulfovibrio vulgaris)).